Consider the following 336-residue polypeptide: Ferredoxin--NADP reductase 1 (336 aa).

Positions 37, 45, 50, 90, 125, 287, and 328 each coordinate FAD.

This sequence belongs to the ferredoxin--NADP reductase type 2 family. In terms of assembly, homodimer. FAD is required as a cofactor.

The catalysed reaction is 2 reduced [2Fe-2S]-[ferredoxin] + NADP(+) + H(+) = 2 oxidized [2Fe-2S]-[ferredoxin] + NADPH. This is Ferredoxin--NADP reductase 1 from Bacillus velezensis (strain DSM 23117 / BGSC 10A6 / LMG 26770 / FZB42) (Bacillus amyloliquefaciens subsp. plantarum).